Reading from the N-terminus, the 196-residue chain is HTH-type transcriptional regulator BetI (196 aa).

An HTH tetR-type domain is found at 8-68; the sequence is PIRRSQLIAA…ATMRHLMQAL (61 aa). Positions 31 to 50 form a DNA-binding region, H-T-H motif; the sequence is SIAYIARLAGVSNGIISHYF.

It participates in amine and polyamine biosynthesis; betaine biosynthesis via choline pathway [regulation]. Its function is as follows. Repressor involved in the biosynthesis of the osmoprotectant glycine betaine. It represses transcription of the choline transporter BetT and the genes of BetAB involved in the synthesis of glycine betaine. The protein is HTH-type transcriptional regulator BetI of Ectopseudomonas mendocina (strain ymp) (Pseudomonas mendocina).